Reading from the N-terminus, the 143-residue chain is Transcription antitermination protein NusB (143 aa).

This sequence belongs to the NusB family.

Involved in transcription antitermination. Required for transcription of ribosomal RNA (rRNA) genes. Binds specifically to the boxA antiterminator sequence of the ribosomal RNA (rrn) operons. In Desulforamulus reducens (strain ATCC BAA-1160 / DSM 100696 / MI-1) (Desulfotomaculum reducens), this protein is Transcription antitermination protein NusB.